Consider the following 443-residue polypeptide: Methylenetetrahydrofolate--tRNA-(uracil-5-)-methyltransferase TrmFO (443 aa).

Position 8 to 13 (8 to 13) interacts with FAD; it reads GAGLAG.

Belongs to the MnmG family. TrmFO subfamily. The cofactor is FAD.

The protein localises to the cytoplasm. The catalysed reaction is uridine(54) in tRNA + (6R)-5,10-methylene-5,6,7,8-tetrahydrofolate + NADH + H(+) = 5-methyluridine(54) in tRNA + (6S)-5,6,7,8-tetrahydrofolate + NAD(+). The enzyme catalyses uridine(54) in tRNA + (6R)-5,10-methylene-5,6,7,8-tetrahydrofolate + NADPH + H(+) = 5-methyluridine(54) in tRNA + (6S)-5,6,7,8-tetrahydrofolate + NADP(+). Catalyzes the folate-dependent formation of 5-methyl-uridine at position 54 (M-5-U54) in all tRNAs. The polypeptide is Methylenetetrahydrofolate--tRNA-(uracil-5-)-methyltransferase TrmFO (Thermus thermophilus (strain ATCC 27634 / DSM 579 / HB8)).